We begin with the raw amino-acid sequence, 86 residues long: High affinity immunoglobulin epsilon receptor subunit gamma (86 aa).

A signal peptide spans Met-1–Ala-18. At Leu-19 to Gln-23 the chain is on the extracellular side. The chain crosses the membrane as a helical span at residues Leu-24 to Cys-44. Residues Arg-45–Gln-86 are Cytoplasmic-facing. The region spanning Ala-54–Glu-82 is the ITAM domain. Residues Tyr-65 and Tyr-76 each carry the phosphotyrosine modification. The residue at position 78 (Thr-78) is a Phosphothreonine.

It belongs to the CD3Z/FCER1G family. In terms of assembly, igE Fc receptor is a tetramer of an alpha chain, a beta chain, and two disulfide linked gamma chains. Associates with FCGR1A; forms a functional signaling complex. The signaling subunit of immunoglobulin gamma (IgG) Fc receptor complex. As a homodimer or a heterodimer of CD247 and FCER1G, associates with the ligand binding subunit FCGR3A to form a functional receptor complex. Associates with CLEC6A. Interacts with CLEC4E. Interacts (via ITAM domain) with SYK (via SH2 domains); activates SYK, enabling integrin-mediated activation of neutrophils and macrophages. Interacts with CSF2RB and recruits SYK in response to IL3 stimulation; this interaction is direct. Interacts with CD300LH; the interaction may be indirect. Interacts with CD300LD. Interacts with TARM1. As to expression, expressed in mast cells (at protein level). Expressed in basophils (at protein level).

It is found in the cell membrane. Functionally, adapter protein containing an immunoreceptor tyrosine-based activation motif (ITAM) that transduces activation signals from various immunoreceptors. As a component of the high-affinity immunoglobulin E (IgE) receptor, mediates allergic inflammatory signaling in mast cells. As a constitutive component of interleukin-3 receptor complex, selectively mediates interleukin 4/IL4 production by basophils, priming T-cells toward effector T-helper 2 subset. Associates with pattern recognition receptors CLEC4D and CLEC4E to form a functional signaling complex in myeloid cells. Binding of mycobacterial trehalose 6,6'-dimycolate (TDM) to this receptor complex leads to phosphorylation of ITAM, triggering activation of SYK, CARD9 and NF-kappa-B, consequently driving maturation of antigen-presenting cells and shaping antigen-specific priming of T-cells toward effector T-helper 1 and T-helper 17 cell subtypes. May function cooperatively with other activating receptors. Functionally linked to integrin beta-2/ITGB2-mediated neutrophil activation. Also involved in integrin alpha-2/ITGA2-mediated platelet activation. In Mus musculus (Mouse), this protein is High affinity immunoglobulin epsilon receptor subunit gamma.